Here is a 72-residue protein sequence, read N- to C-terminus: AERLDENSPEALALNYKHDGASVDHPSHAAGQKCINCLLYTDPSATEWGGCAVFPNKLVNANGWCTAYVARG.

Cys-34, Cys-37, Cys-51, and Cys-65 together coordinate [4Fe-4S] cluster.

This sequence belongs to the high-potential iron-sulfur protein (HiPIP) family. Homodimer.

Its function is as follows. Specific class of high-redox-potential 4Fe-4S ferredoxins. Functions in anaerobic electron transport in most purple and in some other photosynthetic bacteria and in at least one genus (Paracoccus) of halophilic, denitrifying bacteria. The chain is High-potential iron-sulfur protein isozyme 1 (hip1) from Ectothiorhodospira shaposhnikovii (Ectothiorhodospira vacuolata).